The chain runs to 309 residues: Putative proline iminopeptidase (309 aa).

Residues 33-291 (LYVHGGPGSG…LYVTNNAGHS (259 aa)) form the AB hydrolase-1 domain. Serine 105 (nucleophile) is an active-site residue. Residue aspartate 262 is part of the active site. Histidine 290 serves as the catalytic Proton donor.

Belongs to the peptidase S33 family.

Its subcellular location is the cytoplasm. It carries out the reaction Release of N-terminal proline from a peptide.. Its function is as follows. Specifically catalyzes the removal of N-terminal proline residues from peptides. The sequence is that of Putative proline iminopeptidase (pip) from Mycoplasma pneumoniae (strain ATCC 29342 / M129 / Subtype 1) (Mycoplasmoides pneumoniae).